An 82-amino-acid chain; its full sequence is Large ribosomal subunit protein uL23 (82 aa).

This sequence belongs to the universal ribosomal protein uL23 family. As to quaternary structure, part of the 50S ribosomal subunit. Contacts protein L29.

Its function is as follows. Binds to 23S rRNA. One of the proteins that surrounds the polypeptide exit tunnel on the outside of the ribosome. The sequence is that of Large ribosomal subunit protein uL23 from Picrophilus torridus (strain ATCC 700027 / DSM 9790 / JCM 10055 / NBRC 100828 / KAW 2/3).